We begin with the raw amino-acid sequence, 317 residues long: tRNA dimethylallyltransferase (317 aa).

ATP is bound at residue Gly-14–Thr-21. Thr-16–Thr-21 provides a ligand contact to substrate. An interaction with substrate tRNA region spans residues Asp-39 to Gln-42.

The protein belongs to the IPP transferase family. In terms of assembly, monomer. Mg(2+) is required as a cofactor.

It carries out the reaction adenosine(37) in tRNA + dimethylallyl diphosphate = N(6)-dimethylallyladenosine(37) in tRNA + diphosphate. In terms of biological role, catalyzes the transfer of a dimethylallyl group onto the adenine at position 37 in tRNAs that read codons beginning with uridine, leading to the formation of N6-(dimethylallyl)adenosine (i(6)A). The chain is tRNA dimethylallyltransferase from Bacillus thuringiensis subsp. konkukian (strain 97-27).